The following is a 497-amino-acid chain: Probable cytosol aminopeptidase (497 aa).

Positions 267 and 272 each coordinate Mn(2+). Lys-279 is a catalytic residue. Mn(2+)-binding residues include Asp-290, Asp-349, and Glu-351. Arg-353 is an active-site residue.

It belongs to the peptidase M17 family. The cofactor is Mn(2+).

The protein resides in the cytoplasm. It carries out the reaction Release of an N-terminal amino acid, Xaa-|-Yaa-, in which Xaa is preferably Leu, but may be other amino acids including Pro although not Arg or Lys, and Yaa may be Pro. Amino acid amides and methyl esters are also readily hydrolyzed, but rates on arylamides are exceedingly low.. It catalyses the reaction Release of an N-terminal amino acid, preferentially leucine, but not glutamic or aspartic acids.. Its function is as follows. Presumably involved in the processing and regular turnover of intracellular proteins. Catalyzes the removal of unsubstituted N-terminal amino acids from various peptides. This is Probable cytosol aminopeptidase from Pseudomonas putida (strain GB-1).